Here is a 249-residue protein sequence, read N- to C-terminus: 23S rRNA (guanosine-2'-O-)-methyltransferase RlmB (249 aa).

Residues Gly-200, Ile-220, and Leu-229 each coordinate S-adenosyl-L-methionine.

This sequence belongs to the class IV-like SAM-binding methyltransferase superfamily. RNA methyltransferase TrmH family. RlmB subfamily.

The protein localises to the cytoplasm. The catalysed reaction is guanosine(2251) in 23S rRNA + S-adenosyl-L-methionine = 2'-O-methylguanosine(2251) in 23S rRNA + S-adenosyl-L-homocysteine + H(+). In terms of biological role, specifically methylates the ribose of guanosine 2251 in 23S rRNA. The polypeptide is 23S rRNA (guanosine-2'-O-)-methyltransferase RlmB (Xylella fastidiosa (strain 9a5c)).